Here is a 661-residue protein sequence, read N- to C-terminus: FAST kinase domain-containing protein 3, mitochondrial (661 aa).

The region spanning 592 to 650 is the RAP domain; it reads VALCIDGPQRFCLDSKHLLGKEATKQRHLRLLGYQVVQLPYHELELLTSRLELVDYLQR.

It belongs to the FAST kinase family. As to expression, expression detected in spleen, testis, colon, heart, smooth muscle, kidney, brain, lung, liver, brown and white adipose tissue with highest expression in testis and smooth muscle.

The protein localises to the mitochondrion. Functionally, required for normal mitochondrial respiration. Increases steady-state levels and half-lives of a subset of mature mitochondrial mRNAs MT-ND2, MT-ND3, MT-CYTB, MT-CO2, and MT-ATP8/6. Promotes MT-CO1 mRNA translation and increases mitochondrial complex IV assembly and activity. The chain is FAST kinase domain-containing protein 3, mitochondrial (Fastkd3) from Mus musculus (Mouse).